A 309-amino-acid polypeptide reads, in one-letter code: L-aminoadipate-semialdehyde dehydrogenase-phosphopantetheinyl transferase (309 aa).

CoA-binding positions include Arg-47, Arg-86 to Lys-91, and Asn-108 to His-111. Residues Asp-129 and Glu-181 each coordinate Mg(2+). Position 181–185 (Glu-181–Lys-185) interacts with CoA.

It belongs to the P-Pant transferase superfamily. AcpS family. Monomer. Mg(2+) serves as cofactor.

It localises to the cytoplasm. The protein resides in the cytosol. It catalyses the reaction apo-[ACP] + CoA = holo-[ACP] + adenosine 3',5'-bisphosphate + H(+). The catalysed reaction is apo-[ACP] + acetyl-CoA = acetyl-[ACP] + adenosine 3',5'-bisphosphate + H(+). Catalyzes the post-translational modification of target proteins by phosphopantetheine. Can transfer the 4'-phosphopantetheine moiety from coenzyme A, regardless of whether the CoA is presented in the free thiol form or as an acetyl thioester, to a serine residue of a broad range of acceptors including the acyl carrier domain of FASN. The chain is L-aminoadipate-semialdehyde dehydrogenase-phosphopantetheinyl transferase (Aasdhppt) from Rattus norvegicus (Rat).